Consider the following 429-residue polypeptide: Histidine--tRNA ligase (429 aa).

The protein belongs to the class-II aminoacyl-tRNA synthetase family. Homodimer.

It is found in the cytoplasm. It catalyses the reaction tRNA(His) + L-histidine + ATP = L-histidyl-tRNA(His) + AMP + diphosphate + H(+). The sequence is that of Histidine--tRNA ligase from Streptococcus pneumoniae serotype 19F (strain G54).